The following is a 47-amino-acid chain: IgA-inducing protein (47 aa).

The N-terminal stretch at 1–24 is a signal peptide; sequence MKKRSVSGCNITILAVVFSHLSAG.

As to expression, expressed in Peyer patches, spleen, thymus, liver and mesenteric lymph node. Expressed at high levels by dendritic cells, and at lower levels by T-cells, monocytes and B-cells.

Its subcellular location is the secreted. Enhances IgA secretion from B-cells stimulated via CD40. The chain is IgA-inducing protein (IGIP) from Bos taurus (Bovine).